We begin with the raw amino-acid sequence, 378 residues long: Filamin-binding LIM protein 1 (378 aa).

The segment at 1–69 (MASKPEKRVA…RSWMPPGRAA (69 aa)) is filamin-binding. Residues 38 to 179 (WPGRPWESAP…PPPEEPVSFP (142 aa)) are disordered. Pro residues predominate over residues 103 to 115 (LPPPPPPPAADLP). LIM zinc-binding domains follow at residues 186-247 (DICA…TLEK), 248-305 (CGKC…RKFA), and 306-375 (PVCS…RSAA). The PLEKHC1-binding stretch occupies residues 281 to 378 (IGDESFALDS…HVKRSAAGCC (98 aa)).

As to quaternary structure, interacts with PLEKHC1, FLNA, FLNB and FLNC. Interacts with NKX2-5.

It localises to the cell junction. The protein resides in the focal adhesion. The protein localises to the cytoplasm. It is found in the cytoskeleton. Its subcellular location is the stress fiber. In terms of biological role, serves as an anchoring site for cell-ECM adhesion proteins and filamin-containing actin filaments. Is implicated in cell shape modulation (spreading) and motility. May participate in the regulation of filamin-mediated cross-linking and stabilization of actin filaments. May also regulate the assembly of filamin-containing signaling complexes that control actin assembly. Promotes dissociation of FLNA from ITGB3 and ITGB7. Promotes activation of integrins and regulates integrin-mediated cell-cell adhesion. The chain is Filamin-binding LIM protein 1 (FBLIM1) from Bos taurus (Bovine).